Reading from the N-terminus, the 368-residue chain is MVAPHLWLRAETKPLEERSALTPRTAKILADAGFQITIERSSQRAFKDKEFERLGFPMVPEGSWRHAPKDAYIIGLKELPENDNSPLKHTHIQFAHCYKNQEGWREVLSRFPAGNGLLYDLEFLQDDNGRRVAAFGYHAGFAGSAISCLVWAHQLLHPNKQFPAIRPFPNEKSLVRHVARQVRLALKKNNNQYPRILVIGALGRCGTGACDLASKIGIPFDNILRWDINETKKGGPFTEITESDIFVNCIYLSMPIPKFCTVESLNVPNRKLRVVCDVSCDTTNPNNPIPIYNVNTTFDHPTVEVKGVTTPPPLEVISIDHLPTLLPRESSEAFSEALIPSLLALKDVDNAPVWVRAKKLYETMVQKL.

L-saccharopine contacts are provided by R18 and K77. K77 serves as the catalytic Proton acceptor. At S85 the chain carries Phosphoserine. The Proton donor role is filled by H96. Q101 is an L-saccharopine binding site. An NAD(+)-binding site is contributed by R130. 2 residues coordinate L-saccharopine: R131 and F135. Residues 203-204, D227, T231, Y251, and V278 each bind NAD(+); that span reads GR. C205 and C249 are oxidised to a cystine. 279-281 serves as a coordination point for L-saccharopine; sequence SCD. 319 to 322 provides a ligand contact to NAD(+); the sequence is IDHL.

Belongs to the AlaDH/PNT family. In terms of assembly, monomer.

It carries out the reaction L-saccharopine + NAD(+) + H2O = L-lysine + 2-oxoglutarate + NADH + H(+). It functions in the pathway amino-acid biosynthesis; L-lysine biosynthesis via AAA pathway; L-lysine from L-alpha-aminoadipate (fungal route): step 3/3. Catalyzes the NAD(+)-dependent cleavage of saccharopine to L-lysine and 2-oxoglutarate, the final step in the alpha-aminoadipate (AAA) pathway for lysin biosynthesis. This chain is Saccharopine dehydrogenase [NAD(+), L-lysine-forming], found in Schizosaccharomyces pombe (strain 972 / ATCC 24843) (Fission yeast).